The chain runs to 130 residues: Fumarate reductase subunit C (130 aa).

3 consecutive transmembrane segments (helical) span residues 30-50 (EGTS…VFAL), 60-80 (FVSF…LFAA), and 110-130 (IKAL…VALL).

It belongs to the FrdC family. As to quaternary structure, part of an enzyme complex containing four subunits: a flavoprotein (FrdA), an iron-sulfur protein (FrdB), and two hydrophobic anchor proteins (FrdC and FrdD).

It is found in the cell inner membrane. Functionally, two distinct, membrane-bound, FAD-containing enzymes are responsible for the catalysis of fumarate and succinate interconversion; fumarate reductase is used in anaerobic growth, and succinate dehydrogenase is used in aerobic growth. Anchors the catalytic components of the fumarate reductase complex to the cell inner membrane, binds quinones. The protein is Fumarate reductase subunit C of Yersinia pseudotuberculosis serotype O:1b (strain IP 31758).